The primary structure comprises 676 residues: Methionine--tRNA ligase (676 aa).

The 'HIGH' region motif lies at 15–25 (PYANGSIHLGH). Positions 146, 149, 159, and 162 each coordinate Zn(2+). Residues 332–336 (KMSKS) carry the 'KMSKS' region motif. Lys-335 is a binding site for ATP. In terms of domain architecture, tRNA-binding spans 574-676 (DFAKVDMRIA…SGAQPGQQVK (103 aa)).

It belongs to the class-I aminoacyl-tRNA synthetase family. MetG type 1 subfamily. As to quaternary structure, homodimer. Zn(2+) is required as a cofactor.

It is found in the cytoplasm. The enzyme catalyses tRNA(Met) + L-methionine + ATP = L-methionyl-tRNA(Met) + AMP + diphosphate. Functionally, is required not only for elongation of protein synthesis but also for the initiation of all mRNA translation through initiator tRNA(fMet) aminoacylation. The polypeptide is Methionine--tRNA ligase (Erwinia tasmaniensis (strain DSM 17950 / CFBP 7177 / CIP 109463 / NCPPB 4357 / Et1/99)).